Here is a 307-residue protein sequence, read N- to C-terminus: Cilia-and flagella-associated protein 96 (307 aa).

2 disordered regions span residues Tyr-73–Glu-102 and His-218–Thr-279.

Belongs to the CFAP96 family.

It localises to the cytoplasm. The protein localises to the cytoskeleton. Its subcellular location is the microtubule organizing center. It is found in the centrosome. The chain is Cilia-and flagella-associated protein 96 (cfap96.L) from Xenopus laevis (African clawed frog).